The following is an 81-amino-acid chain: Putative membrane protein insertion efficiency factor (81 aa).

Residues 61–81 (NDGGFDPVPPAPSSRTSSIAE) are disordered.

The protein belongs to the UPF0161 family.

It localises to the cell inner membrane. Its function is as follows. Could be involved in insertion of integral membrane proteins into the membrane. The chain is Putative membrane protein insertion efficiency factor from Pseudomonas entomophila (strain L48).